We begin with the raw amino-acid sequence, 199 residues long: FMN-dependent NADH:quinone oxidoreductase 1 (199 aa).

Residues Ser10, 17–19, and 87–90 contribute to the FMN site; these read SNS and MYNF.

The protein belongs to the azoreductase type 1 family. As to quaternary structure, homodimer. The cofactor is FMN.

The catalysed reaction is 2 a quinone + NADH + H(+) = 2 a 1,4-benzosemiquinone + NAD(+). It carries out the reaction N,N-dimethyl-1,4-phenylenediamine + anthranilate + 2 NAD(+) = 2-(4-dimethylaminophenyl)diazenylbenzoate + 2 NADH + 2 H(+). Its function is as follows. Quinone reductase that provides resistance to thiol-specific stress caused by electrophilic quinones. In terms of biological role, also exhibits azoreductase activity. Catalyzes the reductive cleavage of the azo bond in aromatic azo compounds to the corresponding amines. This is FMN-dependent NADH:quinone oxidoreductase 1 from Mesoplasma florum (strain ATCC 33453 / NBRC 100688 / NCTC 11704 / L1) (Acholeplasma florum).